The chain runs to 81 residues: Protein Vpu (81 aa).

The Extracellular segment spans residues 1–7 (MQPLQIL). A helical membrane pass occupies residues 8–28 (AIVALVVAAIIAIVVWTIVYI). The Cytoplasmic portion of the chain corresponds to 29-81 (EYRKILRQRKIDRLIDRITERAEDSGNESEGDQEELSALVERGHLAPWDVDDL). The disordered stretch occupies residues 50 to 81 (AEDSGNESEGDQEELSALVERGHLAPWDVDDL). A phosphoserine; by host CK2 mark is found at Ser53 and Ser57. Positions 53–63 (SGNESEGDQEE) are enriched in acidic residues.

Belongs to the HIV-1 VPU protein family. Homopentamer. Interacts with host CD4 and BRTC; these interactions induce proteasomal degradation of CD4. Interacts with host BST2; this interaction leads to the degradation of host BST2. Interacts with host FBXW11. Interacts with host AP1M1; this interaction plays a role in the mistrafficking and subsequent degradation of host BST2. Interacts with host RANBP2; this interaction allows Vpu to down-regulate host BLM sumoylation. Post-translationally, phosphorylated by host CK2. This phosphorylation is necessary for interaction with human BTRC and degradation of CD4.

It localises to the host membrane. Its activity is regulated as follows. Ion channel activity is inhibited by hexamethylene amiloride in vitro. Its function is as follows. Enhances virion budding by targeting host CD4 and Tetherin/BST2 to proteasome degradation. Degradation of CD4 prevents any unwanted premature interactions between viral Env and its host receptor CD4 in the endoplasmic reticulum. Degradation of antiretroviral protein Tetherin/BST2 is important for virion budding, as BST2 tethers new viral particles to the host cell membrane. Mechanistically, Vpu bridges either CD4 or BST2 to BTRC, a substrate recognition subunit of the Skp1/Cullin/F-box protein E3 ubiquitin ligase, induces their ubiquitination and subsequent proteasomal degradation. The alteration of the E3 ligase specificity by Vpu seems to promote the degradation of host IKBKB, leading to NF-kappa-B down-regulation and subsequent apoptosis. Acts as a viroporin that forms an oligomeric ion channel in membranes. Modulates the host DNA repair mechanisms to promote degradation of nuclear viral cDNA in cells that are already productively infected in order to suppress immune sensing and proviral hyper-integration (superinfection). Manipulates PML-NBs and modulates SUMOylation of host BLM protein thereby enhancing its DNA-end processing activity toward viral unintegrated linear DNA. Also inhibits RAD52-mediated homologous repair of viral cDNA, preventing the generation of dead-end circular forms of single copies of the long terminal repeat and permitting sustained nucleolytic attack. In Human immunodeficiency virus type 1 group M subtype B (isolate SF162) (HIV-1), this protein is Protein Vpu.